The following is a 222-amino-acid chain: Collectrin (222 aa).

Residues 1–14 form the signal peptide; that stretch reads MLWALFFLVTTIHA. Over 15–141 the chain is Extracellular; sequence ELCHPDAENA…LAPPMEPSVP (127 aa). The Collectrin-like domain maps to 21–222; that stretch reads AENAFKVRLS…LTEDERLTPL (202 aa). N-linked (GlcNAc...) asparagine glycosylation is found at N76 and N93. A helical transmembrane segment spans residues 142–162; it reads VWIIVFGVIFCIVTVAIALLV. The Cytoplasmic portion of the chain corresponds to 163–222; that stretch reads LSGIRQRRRNNKGPPGVEDAEDKCENIITIENGIPCDPLDMKGGHINDGFLTEDERLTPL. A phosphothreonine mark is found at T214 and T220.

Belongs to the CLTRN family. As to quaternary structure, monomer. Homodimer. Homodimer; dimerization prevents CLTRN cleavage by BACE2. Interacts with SNAPIN. Interacts with SLC6A18; this interaction regulates the trafficking of SLC6A18 to the cell membrane and its amino acid transporter activity. Interacts with SLC6A19; this interaction regulates the trafficking of SLC6A19 to the cell membrane and its amino acid transporter activity. Interacts with SLC6A20B. In terms of processing, glycosylated. Glycosylation is required for plasma membrane localization and for its cleavage by BACE2. Post-translationally, proteolytically processed in pancreatic beta cells by BACE2 leading to the generation and extracellular release of soluble CLTRN, and a corresponding cell-associated C-terminal fragment which is later cleaved by gamma-secretase. This shedding process inactivates CLTRN. Three cleavage sites have been identified for BACE2, two clustered sites after Phe-116 and Leu-118 and a more membrane proximal site at Phe-125; the preferred BACE2 cleavage site seems to be between Phe-125 and Leu-126, Phe-116 and Leu-118 act as alternative sites. In terms of tissue distribution, expressed on the apical surface of the proximal tubules in the renal cortex (at protein level). Kidney; collecting ducts and proximal tubule. Pancreas; beta cells of islets. Expressed in the cerebral cortex, hippocampus, brainstem and cerebellum.

It is found in the cell membrane. Plays an important role in amino acid transport by acting as binding partner of amino acid transporters SLC6A18 and SLC6A19, regulating their trafficking on the cell surface and their activity. May also play a role in trafficking of amino acid transporters SLC3A1 and SLC7A9 to the renal cortical cell membrane. Regulator of SNARE complex function. Stimulator of beta cell replication. This is Collectrin from Mus musculus (Mouse).